Reading from the N-terminus, the 271-residue chain is Troponin T, fast skeletal muscle (271 aa).

Residues 1-21 (MSDEEVEHVEEEYEEEEEAQE) show a composition bias toward acidic residues. The segment at 1–74 (MSDEEVEHVE…EKVDFDDIQK (74 aa)) is disordered. S2 bears the N-acetylserine mark. A Phosphoserine modification is found at S2. Basic and acidic residues-rich tracts occupy residues 31–53 (PEVH…EKPR) and 62–74 (PEGE…DIQK). S90 bears the Phosphoserine mark. The span at 113-155 (RAERAEQQRIRAEKERERQNRLAEEKARREEEDAKRRAEDDLK) shows a compositional bias: basic and acidic residues. Residues 113-194 (RAERAEQQRI…REMKKKVLAE (82 aa)) are disordered. A phosphoserine mark is found at S161, S168, and S169. Basic and acidic residues predominate over residues 183–194 (TAREMKKKVLAE). S205 bears the Phosphoserine mark. At Y221 the chain carries Phosphotyrosine. A disordered region spans residues 248–271 (IDQAQKHSKKAGTAPKGKVGGRWK).

Belongs to the troponin T family.

Its function is as follows. Troponin T is the tropomyosin-binding subunit of troponin, the thin filament regulatory complex which confers calcium-sensitivity to striated muscle actomyosin ATPase activity. The chain is Troponin T, fast skeletal muscle (Tnnt3) from Bos taurus (Bovine).